The primary structure comprises 875 residues: Probable inorganic carbon transporter subunit DabA (875 aa).

Zn(2+) is bound by residues cysteine 380, aspartate 382, histidine 563, and cysteine 578.

It belongs to the inorganic carbon transporter (TC 9.A.2) DabA family. In terms of assembly, forms a complex with DabB. The cofactor is Zn(2+).

The protein localises to the cell membrane. Its function is as follows. Part of an energy-coupled inorganic carbon pump. The polypeptide is Probable inorganic carbon transporter subunit DabA (Geobacillus thermodenitrificans (strain NG80-2)).